A 338-amino-acid chain; its full sequence is Lipoate-protein ligase A (338 aa).

The BPL/LPL catalytic domain occupies 29–216 (PATQRVLFLW…AFFAHYGERV (188 aa)). ATP-binding positions include R71, 76–79 (GAVF), and K134. (R)-lipoate is bound at residue K134.

The protein belongs to the LplA family. In terms of assembly, monomer.

It is found in the cytoplasm. The catalysed reaction is L-lysyl-[lipoyl-carrier protein] + (R)-lipoate + ATP = N(6)-[(R)-lipoyl]-L-lysyl-[lipoyl-carrier protein] + AMP + diphosphate + H(+). It functions in the pathway protein modification; protein lipoylation via exogenous pathway; protein N(6)-(lipoyl)lysine from lipoate: step 1/2. The protein operates within protein modification; protein lipoylation via exogenous pathway; protein N(6)-(lipoyl)lysine from lipoate: step 2/2. Functionally, catalyzes both the ATP-dependent activation of exogenously supplied lipoate to lipoyl-AMP and the transfer of the activated lipoyl onto the lipoyl domains of lipoate-dependent enzymes. The protein is Lipoate-protein ligase A of Escherichia coli O6:H1 (strain CFT073 / ATCC 700928 / UPEC).